Consider the following 811-residue polypeptide: Lysine-specific histone demethylase 1 homolog 3 (811 aa).

A compositionally biased stretch (pro residues) spans 1 to 10 (MSDQPPPYTP). The tract at residues 1–79 (MSDQPPPYTP…PSAQPPPRAS (79 aa)) is disordered. Residues 44–55 (NKRKRTGFRRKL) show a composition bias toward basic residues. The span at 56–71 (PSGSPAAPVAVAASPS) shows a compositional bias: low complexity. Positions 88–189 (NREPTAEAVT…FGVAPAIKER (102 aa)) constitute an SWIRM domain. Glu227, Arg229, Arg235, and Glu609 together coordinate FAD. The disordered stretch occupies residues 790 to 811 (RNSSRTKTRPSKLKIGIPKSKS).

Belongs to the flavin monoamine oxidase family. FAD is required as a cofactor.

Its function is as follows. Probable histone demethylase. In Oryza sativa subsp. japonica (Rice), this protein is Lysine-specific histone demethylase 1 homolog 3.